A 329-amino-acid chain; its full sequence is Malate dehydrogenase (329 aa).

G12 to G18 lines the NAD(+) pocket. Substrate is bound by residues R93 and R99. NAD(+) contacts are provided by residues N106, Q113, and V130–N132. The substrate site is built by N132 and R163. The active-site Proton acceptor is the H188.

This sequence belongs to the LDH/MDH superfamily. MDH type 2 family.

It carries out the reaction (S)-malate + NAD(+) = oxaloacetate + NADH + H(+). Functionally, catalyzes the reversible oxidation of malate to oxaloacetate. The polypeptide is Malate dehydrogenase (Frankia alni (strain DSM 45986 / CECT 9034 / ACN14a)).